Reading from the N-terminus, the 338-residue chain is Short-chain dehydrogenase/reductase phmF (338 aa).

The NADP(+) site is built by Leu46, Arg71, Asp96, and Asn123. Ser177 acts as the Proton donor in catalysis. Tyr211 and Lys215 together coordinate NADP(+). Tyr211 (proton acceptor) is an active-site residue. Catalysis depends on Lys215, which acts as the Lowers pKa of active site Tyr.

It belongs to the short-chain dehydrogenases/reductases (SDR) family.

It participates in mycotoxin biosynthesis. Functionally, short-chain dehydrogenase/reductase; part of the gene cluster that mediates the biosynthesis of the mycotoxins phomacins, leucine-derived cytochalasans with potent actin polymerization-inhibitory activities and monocot-specific antigerminative activities. The first step in the pathway is catalyzed by the hybrid PKS-NRPS phmA, assisted by the enoyl reductase phmE, that are responsible for fusion of the leucine precursor and the polyketide backbone to produce a 2-pyrrolidone intermediate. The polyketide synthase module (PKS) of phmA is responsible for the synthesis of the polyketide backbone and the downstream nonribosomal peptide synthetase (NRPS) amidates the carboxyl end of the polyketide with the leucine precursor. Because phmA lacks a designated enoylreductase (ER) domain, the required activity is provided the enoyl reductase phmE. Reduction by the hydrolyase phmG, followed by dehydration and intra-molecular Diels-Alder cyclization by the Diels-Alderase phmD then yield the required isoindolone-fused macrocycle. A number of oxidative steps catalyzed by the tailoring cytochrome P450 monooxygenase phmB, the FAD-linked oxidoreductase phmC and the short-chain dehydrogenase/reductase phmF, are further required to afford the final products, phomacin D and phomacin E. The polypeptide is Short-chain dehydrogenase/reductase phmF (Phaeosphaeria nodorum (strain SN15 / ATCC MYA-4574 / FGSC 10173) (Glume blotch fungus)).